The primary structure comprises 198 residues: Holliday junction resolvase RecU (198 aa).

A disordered region spans residues 1 to 22 (MVNYPHKVSSQKRQTSLSQPKN). The span at 11-22 (QKRQTSLSQPKN) shows a compositional bias: polar residues. Mg(2+)-binding residues include T81, D83, E96, and Q115.

This sequence belongs to the RecU family. The cofactor is Mg(2+).

Its subcellular location is the cytoplasm. It carries out the reaction Endonucleolytic cleavage at a junction such as a reciprocal single-stranded crossover between two homologous DNA duplexes (Holliday junction).. Endonuclease that resolves Holliday junction intermediates in genetic recombination. Cleaves mobile four-strand junctions by introducing symmetrical nicks in paired strands. Promotes annealing of linear ssDNA with homologous dsDNA. Required for DNA repair, homologous recombination and chromosome segregation. The chain is Holliday junction resolvase RecU from Streptococcus pneumoniae serotype 2 (strain D39 / NCTC 7466).